Here is a 513-residue protein sequence, read N- to C-terminus: MQLNSTEISDLIKQRIEQFEVVSESRNEGTIVAVSDGIIRIHGLADVMQGEMIELPGSRFAIALNLERDSVGAVVMGPYADLAEGVKVKTTGRILEVPVGRGLLGRVVNTLGEPIDGKGAIDNDGFSPVEVIAPGVIERKSVDQPVQTGYKAVDAMIPIGRGQRELIIGDRQTGKTAMAIDAIINQRDSGIKCVYVAVGQKASTIANVVRKLEEHGALANTIVVVATASEAAALQYLAPYSGCAMGEYFRDRGEDALIVYDDLSKQAVAYRQISLLLKRPPGREAYPGDVFYLHSRLLERASRVNEEYVEKFTKGAVTGQTGSLTALPIIETQAGDVSAFVPTNVISITDGQIFLETDLFNSGLRPAVNPGISVSRVGGAAQTKIIKKLSGGIRTALAQYRELAAFSQFASDLDDATRAQLEHGVRVTELMKQKQYAPMSVAAQAVSIFAAEKGYLKGVELKKVGDFEAALLSYMNSEHAALIKLINETGDYNADIEAELKAGLDKFVATQTW.

Residue 169-176 (GDRQTGKT) participates in ATP binding.

The protein belongs to the ATPase alpha/beta chains family. F-type ATPases have 2 components, CF(1) - the catalytic core - and CF(0) - the membrane proton channel. CF(1) has five subunits: alpha(3), beta(3), gamma(1), delta(1), epsilon(1). CF(0) has three main subunits: a(1), b(2) and c(9-12). The alpha and beta chains form an alternating ring which encloses part of the gamma chain. CF(1) is attached to CF(0) by a central stalk formed by the gamma and epsilon chains, while a peripheral stalk is formed by the delta and b chains.

It localises to the cell inner membrane. It carries out the reaction ATP + H2O + 4 H(+)(in) = ADP + phosphate + 5 H(+)(out). Functionally, produces ATP from ADP in the presence of a proton gradient across the membrane. The alpha chain is a regulatory subunit. The polypeptide is ATP synthase subunit alpha (Shewanella sp. (strain ANA-3)).